Here is a 251-residue protein sequence, read N- to C-terminus: Putative deaminase AgaI (251 aa).

Catalysis depends on D86, which acts as the Proton acceptor; for enolization step. The active-site For ring-opening step is N154. H156 functions as the Proton acceptor; for ring-opening step in the catalytic mechanism. E161 serves as the catalytic For ring-opening step.

This sequence belongs to the glucosamine/galactosamine-6-phosphate isomerase family.

In Escherichia coli (strain K12), this protein is Putative deaminase AgaI (agaI).